Reading from the N-terminus, the 101-residue chain is Large ribosomal subunit protein uL23 (101 aa).

Belongs to the universal ribosomal protein uL23 family. In terms of assembly, part of the 50S ribosomal subunit. Contacts protein L29, and trigger factor when it is bound to the ribosome.

Its function is as follows. One of the early assembly proteins it binds 23S rRNA. One of the proteins that surrounds the polypeptide exit tunnel on the outside of the ribosome. Forms the main docking site for trigger factor binding to the ribosome. The sequence is that of Large ribosomal subunit protein uL23 from Corynebacterium glutamicum (strain R).